Here is a 668-residue protein sequence, read N- to C-terminus: METWEVIASVKEATKGLDLSLDHPLIIKSEDVPSNILQLLQQKNRRQLKHICMKSRKEYFLLEEYGPGFWVKWPYNYFNGYSLPERRTEVVTTVERERAKRETLKTWDELKFKELLHLWSEEPKGSCKLEKDKDLKLDMNPPDMKGESKINDYYSDPKEYIESKYYDALFSIHTPLAYFVKSNLVRLKNTCRTKYGSDSYKIAYQAMLQKFLLSIVQFKDRHDNRLLLEPFSSPIADEKRKNCLTKFVIQDENKNSSTIADLCVVLKSREIKLQILLLLEIIGLNDLDWNFRDFEKKYKLKLKKRSLNLTKKGLVRRRSKKKTSEKDKGIERITTSLDYCEQLDLYLDRACILDILLSSETPNPDAIEASNGTIQEHKKNILDKSKEASLVGFINYVLIPYFNKKVPHAVEFIIQKLKGPSMRPKRALKKVNDSTNVSSPNTVETYNRLSTSQRASRSSIINSVPSSPALRRVDANLFSRKSIASPTPELLNSRTNSNLNEFLESETRSLKRPSQLGRTKSDLTMNHLQKRQFSVSDLSTTRVPNSSTITLKTPFSHSTINAYKTMNNSFRRVGKRKDINETIRLHERVDSEENVQVQATPAVKKRTVTPNKKAQLQSIIESPLNFKDDDTHEGRKNTSNITSTPTNKPPENSSKRRVRRRLFAPEST.

2 disordered regions span residues Lys429 to Ser450 and Glu621 to Thr668. Over residues Asp433–Ser450 the composition is skewed to polar residues. The span at Phe626 to Lys636 shows a compositional bias: basic and acidic residues. Residues Asn637–Asn652 show a composition bias toward polar residues.

Interacts with CDC45 and SLD7.

The protein resides in the nucleus. Required for loading and maintenance of stable association of CDC45 with chromatin during initiation and elongation of DNA replication. Also involved in temporal regulation of origin firing. Required for the association of PSF1 with origins. The polypeptide is DNA replication regulator SLD3 (SLD3) (Saccharomyces cerevisiae (strain ATCC 204508 / S288c) (Baker's yeast)).